Consider the following 4998-residue polypeptide: SCO-spondin (4998 aa).

A signal peptide spans 1-17 (MLPLALLFGMLWTQANG). The 85-residue stretch at 18 to 102 (HWCEQIETVH…ACCPGWGGAH (85 aa)) folds into the EMI domain. The VWFD 1 domain maps to 72-241 (GLCAIYKPPE…KLPGSEPGCL (170 aa)). Intrachain disulfides connect Cys74–Cys202 and Cys103–Cys240. N-linked (GlcNAc...) asparagine glycans are attached at residues Asn88 and Asn130. The TIL 1 domain maps to 349–404 (CPGGQLYSDCVSSCPPSCSAVAQGEEGSCGKECVSGCECPTGLFWDGALCVPAAHC). One can recognise a VWFC 1 domain in the interval 404–496 (CPCYHRRQRY…HGACDTGSCL (93 aa)). Positions 442–615 (AECAVGGDGH…FQVSGDGRCP (174 aa)) constitute a VWFD 2 domain. 2 disulfide bridges follow: Cys444-Cys577 and Cys468-Cys614. N-linked (GlcNAc...) asparagine glycans are attached at residues Asn534 and Asn698. A TIL 2 domain is found at 706-759 (CPGGQVYQECAPVCGHHCGEPEDCKELGICVAGCNCPPGLLWDLEGQCVPPSMC). 4 N-linked (GlcNAc...) asparagine glycosylation sites follow: Asn771, Asn790, Asn824, and Asn866. Positions 892 to 1062 (GWCQASGAPH…HSWRLNPLCP (171 aa)) constitute a VWFD 3 domain. Cystine bridges form between Cys894–Cys1026, Cys916–Cys1061, and Cys937–Cys944. One can recognise a TIL 3 domain in the interval 1153–1209 (CEGGQVYEPCGSTCPPTCHDHHSELRWHCQVITCVEGCFCPEGTLLHGGACMKLAAC). A glycan (N-linked (GlcNAc...) asparagine) is linked at Asn1230. 4 consecutive LDL-receptor class A domains span residues 1253-1290 (GCAEGETLCRENGHCVPLEWLCDNQDDCGDGSDEEGCA), 1293-1328 (VCGEGQMSCQSGHCLPLSLICDGQDDCGDGTDEQGC), 1329-1365 (LCPHGSLACADGRCLPPALLCNGHPDCLDAADEESCL), and 1369-1407 (SCISGEVSCVDGTCVRTIQLCDGVWDCPDGADEGPSHCS). 12 cysteine pairs are disulfide-bonded: Cys1254-Cys1267, Cys1261-Cys1280, Cys1274-Cys1289, Cys1294-Cys1306, Cys1301-Cys1319, Cys1313-Cys1328, Cys1330-Cys1342, Cys1337-Cys1355, Cys1349-Cys1364, Cys1370-Cys1382, Cys1377-Cys1395, and Cys1389-Cys1406. The segment at 1406 to 1440 (CSLPSLPTPPGGIGQNPSTSSLDTAPSPVGSTSPA) is disordered. Residues 1420-1440 (QNPSTSSLDTAPSPVGSTSPA) are compositionally biased toward polar residues. LDL-receptor class A domains are found at residues 1442 to 1478 (PCSLLEFQCNSGECTPRGWRCDQEEDCTDGSDELDCG) and 1480 to 1519 (PCMLYQVPCAHSPHCVSPGQLCDGVTQCPDGSDEDPDVCE). 6 disulfide bridges follow: Cys1443/Cys1455, Cys1450/Cys1468, Cys1462/Cys1477, Cys1481/Cys1494, Cys1488/Cys1507, and Cys1501/Cys1518. Asn1528 is a glycosylation site (N-linked (GlcNAc...) asparagine). An LDL-receptor class A 7 domain is found at 1533–1571 (PCPEFSCPDGTCIDFLLVCDGNPDCELADETEPSLDEQG). 9 disulfide bridges follow: Cys1534/Cys1544, Cys1539/Cys1557, Cys1551/Cys1572, Cys1584/Cys1620, Cys1588/Cys1625, Cys1599/Cys1610, Cys1640/Cys1680, Cys1644/Cys1685, and Cys1654/Cys1664. TSP type-1 domains are found at residues 1572-1626 (CGAW…EACP) and 1628-1686 (DGEW…EGCL). An N-linked (GlcNAc...) asparagine glycan is attached at Asn1598. Asn1687 carries N-linked (GlcNAc...) asparagine glycosylation. Positions 1692–1746 (GELVFRTCAPCPLTCDDISGQAACPPDRPCSSPGCWCPDGKVLNTEGQCVRPRQC) constitute a TIL 4 domain. 2 EGF-like domains span residues 1702–1741 (CPLTCDDISGQAACPPDRPCSSPGCWCPDGKVLNTEGQCV) and 1742–1768 (RPRQCPCLVDGAHYWPGQRIKMDCQLC). Residues 1771 to 1827 (DCGWSSWSPWAECLGPCSSQSLQWSFRSPNNPRLSGHGRQCRGIHRKARRCQTEACE) form the TSP type-1 3 domain. 3 cysteine pairs are disulfide-bonded: Cys1772-Cys1811, Cys1783-Cys1787, and Cys1821-Cys1826. A VWFC 2 domain is found at 1827 to 1887 (EGCEQWGLMY…GMGESCCHCA (61 aa)). Asn1892 and Asn1989 each carry an N-linked (GlcNAc...) asparagine glycan. In terms of domain architecture, F5/8 type C spans 1929-2085 (CYSPLGLAGL…IFLWVELLGL (157 aa)). One can recognise an LDL-receptor class A 8 domain in the interval 2091–2127 (LCPGSRHRCASGECAPKGGPCDGAVDCDDGSDEEGCG). 3 disulfides stabilise this stretch: Cys2092-Cys2104, Cys2099-Cys2117, and Cys2111-Cys2126. The disordered stretch occupies residues 2119 to 2209 (DGSDEEGCGS…TFPPGAKSLH (91 aa)). Polar residues predominate over residues 2130-2144 (HASTTSRTPALSPTQ). Residues 2148–2158 (FPREVSEDLRQ) show a composition bias toward basic and acidic residues. 2 stretches are compositionally biased toward polar residues: residues 2164–2173 (TSHSPPSSGE) and 2190–2201 (QPMQTLSATSTF). 2 LDL-receptor class A domains span residues 2242 to 2278 (PCGPGQVPCDVLGCVEQEQLCDGREDCLDGSDEQHCA) and 2299 to 2335 (LCSPSQLRCGSGECLPFEHRCDLQVNCQDGSDEDNCV). 12 disulfide bridges follow: Cys2243/Cys2255, Cys2250/Cys2268, Cys2262/Cys2277, Cys2300/Cys2312, Cys2307/Cys2325, Cys2319/Cys2334, Cys2337/Cys2373, Cys2348/Cys2352, Cys2383/Cys2388, Cys2403/Cys2440, Cys2407/Cys2445, and Cys2418/Cys2430. 2 TSP type-1 domains span residues 2336–2389 (DCVL…QACP) and 2391–2446 (AGAW…QLCP). The 44-residue stretch at 2468-2511 (VPPCPPSCLDPEANRSCSGHCMEGCRCPPGLLLQDSHCLPLSEC) folds into the TIL 5 domain. N-linked (GlcNAc...) asparagine glycosylation is found at Asn2481 and Asn2530. 3 consecutive TSP type-1 domains span residues 2551-2605 (SCGW…TDCG), 2609-2664 (PGWT…PVCP), and 2666-2719 (PSAW…HPCT). 9 cysteine pairs are disulfide-bonded: Cys2552–Cys2590, Cys2563–Cys2567, Cys2600–Cys2604, Cys2620–Cys2658, Cys2624–Cys2663, Cys2640–Cys2648, Cys2678–Cys2713, Cys2682–Cys2718, and Cys2693–Cys2703. Asn2772 and Asn2802 each carry an N-linked (GlcNAc...) asparagine glycan. TSP type-1 domains lie at 2820-2875 (ACGW…RPCR) and 2876-2919 (GPGA…QPCA). Cystine bridges form between Cys2821–Cys2859, Cys2832–Cys2836, and Cys2869–Cys2874. 4 N-linked (GlcNAc...) asparagine glycosylation sites follow: Asn2897, Asn2952, Asn2999, and Asn3009. One can recognise a TIL 6 domain in the interval 2926–2978 (CPEDQQWLDCAQGPASCAHLSIPGEANQTCHPGCYCLSGMLLLNNVCVPVQDC). TSP type-1 domains lie at 3019 to 3086 (QPAW…PGCN) and 3088 to 3143 (AGGW…QPCP). Cystine bridges form between Cys3031-Cys3080, Cys3035-Cys3085, Cys3046-Cys3070, Cys3100-Cys3137, Cys3104-Cys3142, and Cys3115-Cys3127. N-linked (GlcNAc...) asparagine glycosylation occurs at Asn3146. Residues 3151 to 3201 (EGAEYSPCGPPCPRSCDDLVHCVWRCQPGCYCPLGKVLSADGAICVKPSYC) enclose the TIL 7 domain. Asn3235 is a glycosylation site (N-linked (GlcNAc...) asparagine). 2 consecutive TSP type-1 domains span residues 3244–3306 (SGDW…TACP) and 3308–3363 (DGAW…TLCT). Intrachain disulfides connect Cys3256/Cys3299, Cys3260/Cys3305, Cys3271/Cys3283, Cys3320/Cys3355, Cys3323/Cys3362, and Cys3333/Cys3345. The N-linked (GlcNAc...) asparagine glycan is linked to Asn3301. N-linked (GlcNAc...) asparagine glycosylation is present at Asn3357. The 57-residue stretch at 3365-3421 (CGGGQDLLPCGQPCPHSCQDLSLGSTCQPGSAGCQSGCGCPPGQLSQDGLCVFPVDC) folds into the TIL 8 domain. N-linked (GlcNAc...) asparagine glycosylation is found at Asn3435 and Asn3462. Positions 3481–3529 (PGIWSSWGPWEKCSVSCGGGEQLRSRQCARPPCPGLAQQSRICHIHVCR) constitute a TSP type-1 15 domain. 3 cysteine pairs are disulfide-bonded: Cys3493–Cys3523, Cys3497–Cys3528, and Cys3508–Cys3513. An N-linked (GlcNAc...) asparagine glycan is attached at Asn3638. TSP type-1 domains lie at 3657–3713 (HGSF…PECP), 3727–3779 (AGGW…PSCA), 3793–3849 (NCFW…RACP), and 3851–3906 (PGGW…MPCE). Intrachain disulfides connect Cys3669-Cys3707, Cys3673-Cys3712, and Cys3685-Cys3697. Residue Asn3761 is glycosylated (N-linked (GlcNAc...) asparagine). Intrachain disulfides connect Cys3794–Cys3830, Cys3805–Cys3809, Cys3843–Cys3848, Cys3863–Cys3900, Cys3867–Cys3905, and Cys3878–Cys3890. Residues 3909–3964 (CPAGMEMVSCANHCPYSCSDLQEGGMCQEDQACQLGCRCSEGFLEQDGGCVPVGHC) form the TIL 9 domain. Asn3986 carries N-linked (GlcNAc...) asparagine glycosylation. 4 consecutive TSP type-1 domains span residues 4006–4059 (HCAW…VPCP), 4100–4155 (PRGW…QLCL), 4157–4213 (KLER…GPCQ), and 4215–4269 (DCTW…GNCS). Cystine bridges form between Cys4007–Cys4043, Cys4018–Cys4022, Cys4053–Cys4058, Cys4112–Cys4149, Cys4116–Cys4154, Cys4127–Cys4139, Cys4169–Cys4207, Cys4173–Cys4212, Cys4184–Cys4195, Cys4216–Cys4253, Cys4227–Cys4229, and Cys4263–Cys4268. N-linked (GlcNAc...) asparagine glycosylation is present at Asn4196. Residue Asn4267 is glycosylated (N-linked (GlcNAc...) asparagine). The region spanning 4273 to 4328 (CPPPFEFQSCGSPCAGLCATHLNHRLCQDLPPCQPGCYCPKGLLEQAGSCILPEQC) is the TIL 10 domain. N-linked (GlcNAc...) asparagine glycans are attached at residues Asn4408 and Asn4463. Residues 4465 to 4516 (TCQWGPWGPWSPCQMPCSGGFKLRWRVARDTSAGECPGPWAQTESCNMGSCP) enclose the TSP type-1 24 domain. 3 cysteine pairs are disulfide-bonded: Cys4466–Cys4500, Cys4477–Cys4481, and Cys4510–Cys4515. One can recognise a TIL 11 domain in the interval 4530-4576 (DCANQCPRSCADLWDGVQCLQGPCSPGCRCPPGQLVQDGHCVPISSC). Asn4584, Asn4601, and Asn4606 each carry an N-linked (GlcNAc...) asparagine glycan. The TSP type-1 25 domain occupies 4616-4669 (CPVLGPWSAWSECSAVCGKGTMVRHRSCEEHPDREPCQALDLQQWQECNLQACP). Cystine bridges form between Cys4628–Cys4663, Cys4632–Cys4668, and Cys4643–Cys4652. The TIL 12 domain occupies 4671 to 4725 (CPPGQVLSTCATMCPSLCSHLWPGTICVREPCQLGCGCPGGQLLYNGTCIPPEAC). N-linked (GlcNAc...) asparagine glycosylation is found at Asn4716, Asn4756, Asn4799, and Asn4806. Residues 4777–4835 (CAPGEIWQHGKLGPCEKTCPEMNMTQAWSNCTEAQAPGCVCQLGYFRSQTGLCVPEDHC) enclose the TIL 13 domain. The VWFC 3 domain maps to 4835–4893 (CECWHHGSPHLPGSEWQEACESCRCLHGKSVCIRHCPELSCAQGEVIMQEPGSCCPICQ). 4 cysteine pairs are disulfide-bonded: Cys4892/Cys4952, Cys4918/Cys4969, Cys4928/Cys4985, and Cys4932/Cys4987. Residues 4892–4991 (CQQDTLKEEP…IHSCQCSACQ (100 aa)) form the CTCK domain. An N-linked (GlcNAc...) asparagine glycan is attached at Asn4912.

Belongs to the thrombospondin family. In terms of tissue distribution, subcommissural organ.

Its subcellular location is the secreted. It localises to the extracellular space. Functionally, involved in the modulation of neuronal aggregation. May be involved in developmental events during the formation of the central nervous system. The protein is SCO-spondin of Mus musculus (Mouse).